The chain runs to 149 residues: D-aminoacyl-tRNA deacylase (149 aa).

A Gly-cisPro motif, important for rejection of L-amino acids motif is present at residues glycine 137–proline 138.

This sequence belongs to the DTD family. As to quaternary structure, homodimer.

It localises to the cytoplasm. The enzyme catalyses glycyl-tRNA(Ala) + H2O = tRNA(Ala) + glycine + H(+). The catalysed reaction is a D-aminoacyl-tRNA + H2O = a tRNA + a D-alpha-amino acid + H(+). In terms of biological role, an aminoacyl-tRNA editing enzyme that deacylates mischarged D-aminoacyl-tRNAs. Also deacylates mischarged glycyl-tRNA(Ala), protecting cells against glycine mischarging by AlaRS. Acts via tRNA-based rather than protein-based catalysis; rejects L-amino acids rather than detecting D-amino acids in the active site. By recycling D-aminoacyl-tRNA to D-amino acids and free tRNA molecules, this enzyme counteracts the toxicity associated with the formation of D-aminoacyl-tRNA entities in vivo and helps enforce protein L-homochirality. This chain is D-aminoacyl-tRNA deacylase, found in Thermoanaerobacter pseudethanolicus (strain ATCC 33223 / 39E) (Clostridium thermohydrosulfuricum).